A 95-amino-acid chain; its full sequence is Secreted RxLR effector protein 20 (95 aa).

Positions 1-20 are cleaved as a signal peptide; that stretch reads MQSPYIILFALVTLLGSISG. The short motif at 47–50 is the RxLR element; sequence RLLR.

It belongs to the RxLR effector family.

It localises to the secreted. The protein resides in the host nucleus. The protein localises to the host cytoplasm. Functionally, secreted effector that partially suppresses the host cell death induced by cell death-inducing proteins. The sequence is that of Secreted RxLR effector protein 20 from Plasmopara viticola (Downy mildew of grapevine).